The following is a 159-amino-acid chain: Transcriptional repressor NrdR (159 aa).

The segment at 3–34 is a zinc-finger region; the sequence is CPFCEYNGTRVLDSRPFNHNKSIRRRRECEAC. One can recognise an ATP-cone domain in the interval 49-139; it reads LLIVKKDGTR…VYRQFKDINV (91 aa).

This sequence belongs to the NrdR family. It depends on Zn(2+) as a cofactor.

Its function is as follows. Negatively regulates transcription of bacterial ribonucleotide reductase nrd genes and operons by binding to NrdR-boxes. This is Transcriptional repressor NrdR from Brevibacillus brevis (strain 47 / JCM 6285 / NBRC 100599).